A 342-amino-acid chain; its full sequence is Spore photoproduct lyase (342 aa).

Residues 77-305 enclose the Radical SAM core domain; the sequence is SKPSAEYAIP…EEKRRYKWGR (229 aa). Cysteine 91, cysteine 95, and cysteine 98 together coordinate [4Fe-4S] cluster. A DNA-binding region (H-T-H motif) is located at residues 218–235; sequence EAAVKVAKAGYPLGFIVA.

It belongs to the radical SAM superfamily. SPL family. As to quaternary structure, monomer or homodimer. [4Fe-4S] cluster is required as a cofactor. Requires S-adenosyl-L-methionine as cofactor.

It carries out the reaction (5R)-5,6-dihydro-5-(thymidin-7-yl)thymidine in DNA = a thymidine dimer in DNA. Functionally, involved in repair of UV radiation-induced DNA damage during spore germination. Can repair thymine dimer 5-thyminyl-5,6-dihydrothymine (known as spore photoproduct (SP)) by in situ monomerization of SP to two thymines. The polypeptide is Spore photoproduct lyase (splB) (Bacillus subtilis (strain 168)).